Consider the following 257-residue polypeptide: Geranylgeranylglyceryl phosphate synthase (257 aa).

2 residues coordinate Mg(2+): Asp27 and Thr57. Residues 175-181, 207-208, and 229-230 each bind sn-glycerol 1-phosphate; these read YLEAGSG, GG, and GN.

It belongs to the GGGP/HepGP synthase family. Group II subfamily. The cofactor is Mg(2+).

It is found in the cytoplasm. The enzyme catalyses sn-glycerol 1-phosphate + (2E,6E,10E)-geranylgeranyl diphosphate = sn-3-O-(geranylgeranyl)glycerol 1-phosphate + diphosphate. The protein operates within membrane lipid metabolism; glycerophospholipid metabolism. Its function is as follows. Prenyltransferase that catalyzes the transfer of the geranylgeranyl moiety of geranylgeranyl diphosphate (GGPP) to the C3 hydroxyl of sn-glycerol-1-phosphate (G1P). This reaction is the first ether-bond-formation step in the biosynthesis of archaeal membrane lipids. This chain is Geranylgeranylglyceryl phosphate synthase, found in Sulfolobus acidocaldarius (strain ATCC 33909 / DSM 639 / JCM 8929 / NBRC 15157 / NCIMB 11770).